The chain runs to 177 residues: Large ribosomal subunit protein eL20 (177 aa).

The protein belongs to the eukaryotic ribosomal protein eL20 family.

This Spodoptera frugiperda (Fall armyworm) protein is Large ribosomal subunit protein eL20 (RpL18A).